We begin with the raw amino-acid sequence, 244 residues long: Probable transcriptional regulatory protein DR_2548 (244 aa).

The tract at residues 1–23 (MAGHSKWAQIKRKKGANDKKRSA) is disordered.

It belongs to the TACO1 family.

The protein localises to the cytoplasm. The protein is Probable transcriptional regulatory protein DR_2548 of Deinococcus radiodurans (strain ATCC 13939 / DSM 20539 / JCM 16871 / CCUG 27074 / LMG 4051 / NBRC 15346 / NCIMB 9279 / VKM B-1422 / R1).